A 162-amino-acid polypeptide reads, in one-letter code: RNA pyrophosphohydrolase (162 aa).

Positions P11 to A155 constitute a Nudix hydrolase domain. The short motif at G45–G66 is the Nudix box element.

The protein belongs to the Nudix hydrolase family. RppH subfamily. It depends on a divalent metal cation as a cofactor.

In terms of biological role, accelerates the degradation of transcripts by removing pyrophosphate from the 5'-end of triphosphorylated RNA, leading to a more labile monophosphorylated state that can stimulate subsequent ribonuclease cleavage. The sequence is that of RNA pyrophosphohydrolase from Cereibacter sphaeroides (strain ATCC 17029 / ATH 2.4.9) (Rhodobacter sphaeroides).